Consider the following 675-residue polypeptide: MRSMMMEREGRNEIEREVIDDLEETQNEGDDFKSIPPWKEQITFRGIVASLIIGIIYSVIVMKLNLTTGLVPNLNVSAALLAFVFLRSWTKLLTKAGIVTKPFTKQENTVVQTCAVACYSIAVGGGFGSYLLGLNRITYEQSGGTHTDGNYPEGTKEPGIGWMTAFLFFTCFVGLLALVPLRKIMIIDYKLTYPSGTATAVLINGFHTPKGNKMAKKQVFGFVKYFSFSFIWAFFQWFFSGGTECGFIQFPTFGLEALKNTFYFDFSMTYVGAGMICPHIVNISLLFGAVLSWGIMWPLIKGLKGDWFPSTLPENSMKSLNGYKVFISISLILGDGLYQFIKILFKTGINMYVKLNNRNSGKSNSEKDKQSIADLKRDEIFVRDSIPLWVAAVGYAAFSVVSIIAIPIMFPELKWYFIVVAYMLAPSLGFSNAYGAGLTDMNMAYNYGKVALFILAAMAGKQNGVVAGLVGCGLIKSIVSISSDLMHDFKTGHLTLTSPRSMLVSQAIGTAIGCVVAPLTFFLFYKAFDVGNQEGEYKAPYALVYRNMAILGVEGFSALPQHCLQLCYGFFAFAVAANLVRDRLPDKIGNWVPLPMAMAVPFLVGGYFAIDMCVGSLIVFAWNMRDRVKAGLMVPAVASGLICGDGLWILPSSVLALAGVRPPICMGFMPSKYSS.

The next 14 helical transmembrane spans lie at 42 to 62 (ITFRGIVASLIIGIIYSVIVM), 66 to 86 (LTTGLVPNLNVSAALLAFVFL), 114 to 134 (CAVACYSIAVGGGFGSYLLGL), 159 to 179 (GIGWMTAFLFFTCFVGLLALV), 219 to 239 (VFGFVKYFSFSFIWAFFQWFF), 280 to 300 (IVNISLLFGAVLSWGIMWPLI), 325 to 345 (VFISISLILGDGLYQFIKILF), 386 to 406 (IPLWVAAVGYAAFSVVSIIAI), 408 to 428 (IMFPELKWYFIVVAYMLAPSL), 450 to 470 (VALFILAAMAGKQNGVVAGLV), 504 to 524 (VSQAIGTAIGCVVAPLTFFLF), 556 to 576 (FSALPQHCLQLCYGFFAFAVA), 602 to 622 (FLVGGYFAIDMCVGSLIVFAW), and 630 to 650 (AGLMVPAVASGLICGDGLWIL).

The protein belongs to the YSL (TC 2.A.67.2) family. In terms of tissue distribution, expressed in leaves, anthers and pollen grains. Restricted to the vasculature.

Its subcellular location is the membrane. Its function is as follows. May be involved in the lateral transport of nicotianamine-chelated metals in the vasculature. This chain is Metal-nicotianamine transporter YSL3 (YSL3), found in Arabidopsis thaliana (Mouse-ear cress).